A 144-amino-acid polypeptide reads, in one-letter code: UPF0178 protein Exig_1155 (144 aa).

The segment at 110-144 (IRRAGGRTKGPKKRTRQEDASFEQSFSRLLTEKTD) is disordered. Residues 113–124 (AGGRTKGPKKRT) show a composition bias toward basic residues.

The protein belongs to the UPF0178 family.

The protein is UPF0178 protein Exig_1155 of Exiguobacterium sibiricum (strain DSM 17290 / CCUG 55495 / CIP 109462 / JCM 13490 / 255-15).